Reading from the N-terminus, the 485-residue chain is Membrane-bound lytic murein transglycosylase F (485 aa).

The first 29 residues, 1-29 (MFAHTALRQRCAKWLLATGLFLLLGACVE), serve as a signal peptide directing secretion. Positions 30–267 (KPSTLERVKE…RLKDRYYGHV (238 aa)) are non-LT domain. Positions 268–485 (DVLGYVGAYT…DKPADKSSPM (218 aa)) are LT domain. E314 is an active-site residue. A disordered region spans residues 465–485 (EGNLHVPGVNKDKPADKSSPM). A compositionally biased stretch (basic and acidic residues) spans 474–485 (NKDKPADKSSPM).

It in the N-terminal section; belongs to the bacterial solute-binding protein 3 family. This sequence in the C-terminal section; belongs to the transglycosylase Slt family.

The protein localises to the cell outer membrane. It carries out the reaction Exolytic cleavage of the (1-&gt;4)-beta-glycosidic linkage between N-acetylmuramic acid (MurNAc) and N-acetylglucosamine (GlcNAc) residues in peptidoglycan, from either the reducing or the non-reducing ends of the peptidoglycan chains, with concomitant formation of a 1,6-anhydrobond in the MurNAc residue.. In terms of biological role, murein-degrading enzyme that degrades murein glycan strands and insoluble, high-molecular weight murein sacculi, with the concomitant formation of a 1,6-anhydromuramoyl product. Lytic transglycosylases (LTs) play an integral role in the metabolism of the peptidoglycan (PG) sacculus. Their lytic action creates space within the PG sacculus to allow for its expansion as well as for the insertion of various structures such as secretion systems and flagella. The chain is Membrane-bound lytic murein transglycosylase F from Pseudomonas putida (strain ATCC 47054 / DSM 6125 / CFBP 8728 / NCIMB 11950 / KT2440).